The following is a 504-amino-acid chain: Maturase K (504 aa).

The protein belongs to the intron maturase 2 family. MatK subfamily.

It is found in the plastid. Its subcellular location is the chloroplast. Its function is as follows. Usually encoded in the trnK tRNA gene intron. Probably assists in splicing its own and other chloroplast group II introns. This is Maturase K from Actinidia chinensis (Kiwi).